A 134-amino-acid chain; its full sequence is NAD(P)H-quinone oxidoreductase subunit 3 (134 aa).

3 helical membrane-spanning segments follow: residues 20–40 (GYDA…LALV), 78–98 (MFAL…PWAV), and 103–123 (LGLL…VALA).

Belongs to the complex I subunit 3 family. As to quaternary structure, NDH-1 can be composed of about 15 different subunits; different subcomplexes with different compositions have been identified which probably have different functions.

It localises to the cellular thylakoid membrane. It carries out the reaction a plastoquinone + NADH + (n+1) H(+)(in) = a plastoquinol + NAD(+) + n H(+)(out). The enzyme catalyses a plastoquinone + NADPH + (n+1) H(+)(in) = a plastoquinol + NADP(+) + n H(+)(out). Its function is as follows. NDH-1 shuttles electrons from an unknown electron donor, via FMN and iron-sulfur (Fe-S) centers, to quinones in the respiratory and/or the photosynthetic chain. The immediate electron acceptor for the enzyme in this species is believed to be plastoquinone. Couples the redox reaction to proton translocation, and thus conserves the redox energy in a proton gradient. Cyanobacterial NDH-1 also plays a role in inorganic carbon-concentration. This is NAD(P)H-quinone oxidoreductase subunit 3 from Prochlorococcus marinus (strain MIT 9303).